We begin with the raw amino-acid sequence, 414 residues long: Cytosolic-abundant heat soluble protein 89226 (414 aa).

Basic and acidic residues-rich tracts occupy residues 27 to 45 (IGED…DKRP) and 69 to 84 (AGQR…ERLR). Residues 27 to 155 (IGEDRGKEDP…SNPGMNNGMT (129 aa)) are disordered. 2 stretches are compositionally biased toward low complexity: residues 86–101 (SRSS…VEPS) and 120–134 (SSNR…SSSD). Residues 142–155 (ASRNSNPGMNNGMT) are compositionally biased toward polar residues. CAHS motif regions lie at residues 305–323 (YRNA…LERQ) and 342–360 (QQQE…LEQE). A coiled-coil region spans residues 341-376 (RQQQEIRLEAEYAMRALEQERVNARAALDQAMASTN). Positions 388–405 (THSQGRVTTTSESRTSQA) are enriched in polar residues. A disordered region spans residues 388–414 (THSQGRVTTTSESRTSQARGPATAAVI).

Belongs to the Cytosolic-abundant heat soluble protein (CAHS) family.

It is found in the cytoplasm. In terms of biological role, CAHS proteins are cytosolic heat soluble proteins that seem to contribute to the anhydrobiosis in tardigrades, but their specific mechanisms are yet to be identified. It is possible that protection during anhydrobiosis might occur via the stabilization of vitrifying small molecules such as sugars, but not via the direct glass transition of CAHS proteins themselves. The polypeptide is Cytosolic-abundant heat soluble protein 89226 (Hypsibius exemplaris (Freshwater tardigrade)).